A 178-amino-acid polypeptide reads, in one-letter code: uncharacterized protein (178 aa).

One can recognise an N-acetyltransferase domain in the interval 9-173; it reads LTLRKMELED…IDVYMFSLLK (165 aa).

This is an uncharacterized protein from Bacillus licheniformis.